The primary structure comprises 382 residues: Chaperone protein DnaJ (382 aa).

The J domain maps to 5–69 (DYYEILGVSK…EKRARYDRFG (65 aa)). The segment at 137–219 (GKETEIEIPR…CGGTGRVKRR (83 aa)) adopts a CR-type zinc-finger fold. The Zn(2+) site is built by Cys-150, Cys-153, Cys-167, Cys-170, Cys-193, Cys-196, Cys-207, and Cys-210. CXXCXGXG motif repeat units follow at residues 150-157 (CDTCQGSG), 167-174 (CPHCHGSG), 193-200 (CPVCGGTG), and 207-214 (CPTCGGTG). A disordered region spans residues 154–175 (QGSGAKPGTSPTSCPHCHGSGQ).

The protein belongs to the DnaJ family. As to quaternary structure, homodimer. The cofactor is Zn(2+).

It localises to the cytoplasm. In terms of biological role, participates actively in the response to hyperosmotic and heat shock by preventing the aggregation of stress-denatured proteins and by disaggregating proteins, also in an autonomous, DnaK-independent fashion. Unfolded proteins bind initially to DnaJ; upon interaction with the DnaJ-bound protein, DnaK hydrolyzes its bound ATP, resulting in the formation of a stable complex. GrpE releases ADP from DnaK; ATP binding to DnaK triggers the release of the substrate protein, thus completing the reaction cycle. Several rounds of ATP-dependent interactions between DnaJ, DnaK and GrpE are required for fully efficient folding. Also involved, together with DnaK and GrpE, in the DNA replication of plasmids through activation of initiation proteins. The polypeptide is Chaperone protein DnaJ (Geobacillus kaustophilus (strain HTA426)).